A 1026-amino-acid polypeptide reads, in one-letter code: Multidrug resistance protein MdtC (1026 aa).

The next 11 membrane-spanning stretches (helical) occupy residues 15 to 35, 333 to 353, 360 to 380, 387 to 407, 431 to 451, 463 to 483, 528 to 548, 853 to 873, 897 to 917, 953 to 973, and 984 to 1004; these read ILIA…LPVA, EVEE…FLFL, LIPA…MYLC, LSLM…IVVL, VGFT…PLLL, FAVT…TLTP, LVGV…IAIP, LILI…LYES, LFNA…IGIV, PIMM…LSGG, and ITIV…TPVV.

It belongs to the resistance-nodulation-cell division (RND) (TC 2.A.6) family. MdtC subfamily. In terms of assembly, part of a tripartite efflux system composed of MdtA, MdtB and MdtC. MdtC forms a heteromultimer with MdtB.

It is found in the cell inner membrane. This chain is Multidrug resistance protein MdtC, found in Salmonella paratyphi A (strain AKU_12601).